Reading from the N-terminus, the 419-residue chain is Probable glycosidase C21B10.07 (419 aa).

Disordered regions lie at residues 1–20 (MGIPDSTTDSRHSLSSAALS) and 29–67 (DPARKNESTNDVIDNHTDTEIDDHDNDHENLDSNNNNEN). Basic and acidic residues predominate over residues 30 to 59 (PARKNESTNDVIDNHTDTEIDDHDNDHENL). The helical transmembrane segment at 88–108 (FIWILIFIVALICSVLIGVLG) threads the bilayer. A GH16 domain is found at 122-387 (PSYKAKTYSL…WAGSSVYSSA (266 aa)). Catalysis depends on Glu-237, which acts as the Nucleophile. The Proton donor role is filled by Glu-242.

It belongs to the glycosyl hydrolase 16 family.

It is found in the membrane. The sequence is that of Probable glycosidase C21B10.07 from Schizosaccharomyces pombe (strain 972 / ATCC 24843) (Fission yeast).